We begin with the raw amino-acid sequence, 221 residues long: MKKEKAIVVFSGGQDSTTCLFWALKQFDEVEAVTFDYGQRHRLEIEVAASIAKELGVPHTVLDMSLLNQLAPNALTRSDIAIEQNEGQLPSTFVDGRNLLFLSFAAVLAKQKGARHLVTGVCETDFSGYPDCRDIFIKSLNVTLNLAMDYQFVIHTPLMWLTKAKTWKLADELGAFDFVRTKTLTCYNGIIADGCGECPACVLRRRGLEEYMKEKEGANQL.

10–20 (FSGGQDSTTCL) is an ATP binding site. Zn(2+) is bound by residues Cys-186, Cys-195, Cys-198, and Cys-201.

The protein belongs to the QueC family. In terms of assembly, homodimer. The cofactor is Zn(2+).

The catalysed reaction is 7-carboxy-7-deazaguanine + NH4(+) + ATP = 7-cyano-7-deazaguanine + ADP + phosphate + H2O + H(+). It functions in the pathway purine metabolism; 7-cyano-7-deazaguanine biosynthesis. Functionally, catalyzes the ATP-dependent conversion of 7-carboxy-7-deazaguanine (CDG) to 7-cyano-7-deazaguanine (preQ(0)). This chain is 7-cyano-7-deazaguanine synthase, found in Geobacillus sp. (strain WCH70).